The chain runs to 346 residues: C5a anaphylatoxin chemotactic receptor 1 (346 aa).

At 1-33 (MDDNNSDWTSYDFGNDTIPSPNEISLSHIGTRH) the chain is on the extracellular side. N-linked (GlcNAc...) asparagine glycosylation is found at N4 and N15. Residues 34–60 (WITLVCYGIVFLLGVPGNALVVWVTGF) form a helical membrane-spanning segment. The Cytoplasmic portion of the chain corresponds to 61–65 (RMPNS). A helical transmembrane segment spans residues 66-89 (VNAQWFLNLAIADLLCCLSLPILM). Topologically, residues 90–106 (VPLAQDQHWPFGALACK) are extracellular. Cysteines 105 and 183 form a disulfide. Residues 107–128 (LFSGIFYMMMYCSVLLLVVISL) form a helical membrane-spanning segment. Topologically, residues 129-149 (DRFLLVTKPVWCQNNRQPRQA) are cytoplasmic. Residues 150–170 (RILCFIIWILGLLGSSPYFAH) traverse the membrane as a helical segment. Over 171–194 (MEIQHHSETKTVCTGSYSSLGHAW) the chain is Extracellular. A helical transmembrane segment spans residues 195–220 (AITIIRSFLFFLLPFLIICISHWKVY). The Cytoplasmic portion of the chain corresponds to 221–238 (HMTSSGRRQRDKSSRTLR). A helical transmembrane segment spans residues 239-261 (VILALVLGFFLCWTPLHIVDLLI). Residues 262–279 (LVSDQPSERFEVNLNLAH) are Extracellular-facing. The chain crosses the membrane as a helical span at residues 280-300 (VLTLCLAYINSCLNPLLYVCL). Topologically, residues 301–346 (GRGFKENLISSLRSVLHFASEAPTHGPSMTTNSKSTTDGVFREKPV) are cytoplasmic. A disordered region spans residues 323–346 (PTHGPSMTTNSKSTTDGVFREKPV). The span at 327 to 338 (PSMTTNSKSTTD) shows a compositional bias: polar residues.

It belongs to the G-protein coupled receptor 1 family.

The protein localises to the cell membrane. In terms of biological role, receptor for the chemotactic and inflammatory peptide anaphylatoxin C5a. This receptor stimulates chemotaxis, granule enzyme release and superoxide anion production. This Danio rerio (Zebrafish) protein is C5a anaphylatoxin chemotactic receptor 1 (c5ar1).